Consider the following 348-residue polypeptide: Protein RecA (348 aa).

64–71 (GPESSGKT) contacts ATP.

The protein belongs to the RecA family.

It localises to the cytoplasm. Its function is as follows. Can catalyze the hydrolysis of ATP in the presence of single-stranded DNA, the ATP-dependent uptake of single-stranded DNA by duplex DNA, and the ATP-dependent hybridization of homologous single-stranded DNAs. It interacts with LexA causing its activation and leading to its autocatalytic cleavage. The protein is Protein RecA of Blastochloris viridis (Rhodopseudomonas viridis).